The chain runs to 333 residues: 4-hydroxy-3-methylbut-2-enyl diphosphate reductase (333 aa).

Cys33 contributes to the [4Fe-4S] cluster binding site. (2E)-4-hydroxy-3-methylbut-2-enyl diphosphate is bound by residues His62 and His95. His62 and His95 together coordinate dimethylallyl diphosphate. Positions 62 and 95 each coordinate isopentenyl diphosphate. Cys117 contacts [4Fe-4S] cluster. His145 provides a ligand contact to (2E)-4-hydroxy-3-methylbut-2-enyl diphosphate. Dimethylallyl diphosphate is bound at residue His145. His145 provides a ligand contact to isopentenyl diphosphate. Glu147 functions as the Proton donor in the catalytic mechanism. (2E)-4-hydroxy-3-methylbut-2-enyl diphosphate is bound at residue Thr186. Cys216 is a binding site for [4Fe-4S] cluster. (2E)-4-hydroxy-3-methylbut-2-enyl diphosphate is bound by residues Ser244, Ser245, Asn246, and Ser289. Positions 244, 245, 246, and 289 each coordinate dimethylallyl diphosphate. Residues Ser244, Ser245, Asn246, and Ser289 each contribute to the isopentenyl diphosphate site.

The protein belongs to the IspH family. The cofactor is [4Fe-4S] cluster.

The catalysed reaction is isopentenyl diphosphate + 2 oxidized [2Fe-2S]-[ferredoxin] + H2O = (2E)-4-hydroxy-3-methylbut-2-enyl diphosphate + 2 reduced [2Fe-2S]-[ferredoxin] + 2 H(+). It carries out the reaction dimethylallyl diphosphate + 2 oxidized [2Fe-2S]-[ferredoxin] + H2O = (2E)-4-hydroxy-3-methylbut-2-enyl diphosphate + 2 reduced [2Fe-2S]-[ferredoxin] + 2 H(+). Its pathway is isoprenoid biosynthesis; dimethylallyl diphosphate biosynthesis; dimethylallyl diphosphate from (2E)-4-hydroxy-3-methylbutenyl diphosphate: step 1/1. The protein operates within isoprenoid biosynthesis; isopentenyl diphosphate biosynthesis via DXP pathway; isopentenyl diphosphate from 1-deoxy-D-xylulose 5-phosphate: step 6/6. Its function is as follows. Catalyzes the conversion of 1-hydroxy-2-methyl-2-(E)-butenyl 4-diphosphate (HMBPP) into a mixture of isopentenyl diphosphate (IPP) and dimethylallyl diphosphate (DMAPP). Acts in the terminal step of the DOXP/MEP pathway for isoprenoid precursor biosynthesis. The polypeptide is 4-hydroxy-3-methylbut-2-enyl diphosphate reductase (Corynebacterium diphtheriae (strain ATCC 700971 / NCTC 13129 / Biotype gravis)).